The primary structure comprises 237 residues: Demethylmenaquinone methyltransferase (237 aa).

S-adenosyl-L-methionine is bound by residues Thr58, Asp79, and Asn106 to Ala107.

Belongs to the class I-like SAM-binding methyltransferase superfamily. MenG/UbiE family.

It catalyses the reaction a 2-demethylmenaquinol + S-adenosyl-L-methionine = a menaquinol + S-adenosyl-L-homocysteine + H(+). Its pathway is quinol/quinone metabolism; menaquinone biosynthesis; menaquinol from 1,4-dihydroxy-2-naphthoate: step 2/2. Its function is as follows. Methyltransferase required for the conversion of demethylmenaquinol (DMKH2) to menaquinol (MKH2). This chain is Demethylmenaquinone methyltransferase, found in Bacillus mycoides (strain KBAB4) (Bacillus weihenstephanensis).